The primary structure comprises 117 residues: Minor capsid protein p17 (117 aa).

A glycan (N-linked (GlcNAc...) asparagine; by host) is linked at asparagine 12. A helical transmembrane segment spans residues 39 to 59 (AIILGILILLVIILIVVAIVY). N-linked (GlcNAc...) asparagine; by host glycosylation is found at asparagine 61 and asparagine 98. Residues 97-117 (KNSTTQQHIPSDEQLAELAHS) are disordered.

Belongs to the asfivirus minor capsid protein p17 family. As to quaternary structure, interacts with the minor capsid protein M1249L and with the hexon capsid protein p72 capsomers; these interactions form a rigid zipper structure that stabilizes the capsomers. Interacts with host STING1.

The protein localises to the virion membrane. Its subcellular location is the host endoplasmic reticulum membrane. Together with the penton and the other minor capsid proteins (M1249L, p49), forms a complicated network immediately below the outer capsid shell, stabilizing the whole capsid. Three copies of p17 encircle each p72 capsomer in the inner capsid shell, anchoring p72 capsomers on the inner membrane. Required for the assembly of the capsid and icosahedral morphogenesis. Additionally, inhibits the host cGAS-STING pathway through its interaction with STING1 and subsequent interference of the recruitment of downstream components TBK1 and IKBKE. This chain is Minor capsid protein p17, found in Ornithodoros (relapsing fever ticks).